A 1129-amino-acid chain; its full sequence is MAVKSIKVKLRLDDMPEIRAGLWKLHKEVNAGVRYYTEWLSLLRQENLYRRSPNGDGEQECDKTAEECKAELLERLRARQVENGHRGPAGSDDELLQLARQLYELLVPQAIGAKGDAQQIARKFLSPLADKDAVGGLGIAKAGNKPRWVRMREAGEPGWEEEKEKAETRKSADRTADVLRALADFGLKPLMRVYTDSEMSSVEWKPLRKGQAVRTWDRDMFQQAIERMMSWESWNQRVGQEYAKLVEQKNRFEQKNFVGQEHLVHLVNQLQQDMKEASPGLESKEQTAHYVTGRALRGSDKVFEKWGKLAPDAPFDLYDAEIKNVQRRNTRRFGSHDLFAKLAEPEYQALWREDASFLTRYAVYNSILRKLNHAKMFATFTLPDATAHPIWTRFDKLGGNLHQYTFLFNEFGERRHAIRFHKLLKVENGVAREVDDVTVPISMSEQLDNLLPRDPNEPIALYFRDYGAEQHFTGEFGGAKIQCRRDQLAHMHRRRGARDVYLNVSVRVQSQSEARGERRPPYAAVFRLVGDNHRAFVHFDKLSDYLAEHPDDGKLGSEGLLSGLRVMSVDLGLRTSASISVFRVARKDELKPNSKGRVPFFFPIKGNDNLVAVHERSQLLKLPGETESKDLRAIREERQRTLRQLRTQLAYLRLLVRCGSEDVGRRERSWAKLIEQPVDAANHMTPDWREAFENELQKLKSLHGICSDKEWMDAVYESVRRVWRHMGKQVRDWRKDVRSGERPKIRGYAKDVVGGNSIEQIEYLERQYKFLKSWSFFGKVSGQVIRAEKGSRFAITLREHIDHAKEDRLKKLADRIIMEALGYVYALDERGKGKWVAKYPPCQLILLEELSEYQFNNDRPPSENNQLMQWSHRGVFQELINQAQVHDLLVGTMYAAFSSRFDARTGAPGIRCRRVPARCTQEHNPEPFPWWLNKFVVEHTLDACPLRADDLIPTGEGEIFVSPFSAEEGDFHQIHADLNAAQNLQQRLWSDFDISQIRLRCDWGEVDGELVLIPRLTGKRTADSYSNKVFYTNTGVTYYERERGKKRRKVFAQEKLSEEEAELLVEADEAREKSVVLMRDPSGIINRGNWTRQKEFWSMVNQRIEGYLVKQIRSRVPLQDSACENTGDI.

Positions 1 to 14 are WED-I (OBD-I) domain; it reads MAVKSIKVKLRLDD. The interval 4–9 is binds sgRNA; that stretch reads KSIKVK. An REC1 (Helical-1)domain region spans residues 15 to 386; it reads MPEIRAGLWK…FATFTLPDAT (372 aa). 2 binds DNA protospacer adjacent motif (PAM) on target DNA regions span residues 118–122 and 143–144; these read QQIAR and GN. Residues 387–518 form a WED-II (OBD-II) domain region; it reads AHPIWTRFDK…QSQSEARGER (132 aa). Residues 442-446 are binds sgRNA; the sequence is SMSEQ. The segment at 519–628 is ruvC-I domain; sequence RPPYAAVFRL…LLKLPGETES (110 aa). The active-site For DNase activity of RuvC domain is aspartate 570. The binds non-target ssDNA stretch occupies residues 573–574; it reads LR. The interval 629–658 is bridge helix domain; sequence KDLRAIREERQRTLRQLRTQLAYLRLLVRC. Residues 659–784 form an REC2 (Helical-II) domain region; sequence GSEDVGRRER…SFFGKVSGQV (126 aa). Binds sgRNA stretches follow at residues 742 to 746, 753 to 754, 792 to 796, 800 to 819, and 835 to 839; these read RPKIR, VG, RFAIT, HIDH…IIME, and WVAKY. A ruvC-II domain region spans residues 785–900; it reads IRAEKGSRFA…GTMYAAFSSR (116 aa). The For DNase activity of RuvC domain role is filled by glutamate 848. The interval 897–900 is binds non-target ssDNA; that stretch reads FSSR. Phosphate contacts are provided by serine 899 and arginine 911. The tract at residues 901–974 is nuc-I domain; the sequence is FDARTGAPGI…SAEEGDFHQI (74 aa). Residues 973–978 are binds sgRNA; the sequence is QIHADL. The tract at residues 975-993 is ruvC-III domain; it reads HADLNAAQNLQQRLWSDFD. Aspartate 977 functions as the For DNase activity of RuvC domain in the catalytic mechanism. The tract at residues 994-1129 is nuc-II domain; sequence ISQIRLRCDW…DSACENTGDI (136 aa).

This sequence belongs to the CRISPR-associated endonuclease Cas12b family. In terms of assembly, monomer. A divalent metal cation serves as cofactor.

In terms of biological role, CRISPR (clustered regularly interspaced short palindromic repeat), is an adaptive immune system that provides protection against mobile genetic elements (viruses, transposable elements and conjugative plasmids). CRISPR clusters contain sequences complementary to antecedent mobile elements and target invading nucleic acids. CRISPR clusters are transcribed and processed into CRISPR RNA (crRNA). In type II CRISPR systems correct processing of pre-crRNA requires a trans-encoded small RNA (tracrRNA), endogenous ribonuclease 3 (rnc) and this protein. The tracrRNA serves as a guide for ribonuclease 3-aided processing of pre-crRNA. Protein-crRNA-tracrRNA endonucleolytically cleave dsDNA target complementary to the spacer; protein is inactive in the absence of crRNA homologous to the target and tracrRNA. Recognizes a short motif in the CRISPR repeat sequences (the 5' PAM or protospacer adjacent motif, TTN in this organism) to help distinguish self versus nonself, as targets within the bacterial CRISPR locus do not have PAMs. PAM recognition is also required for catalytic activity. Cleavage results in staggered 6-8 base 5'-overhangs 14-17 and 23-24 bases downstream of the PAM (protospacer adjacent motif) on the non-target and target strands respectively. Both target and non-target strand DNA are probably independently cleaved in the same active site. The sequence is that of CRISPR-associated endonuclease Cas12b from Alicyclobacillus acidoterrestris (strain ATCC 49025 / DSM 3922 / CIP 106132 / NCIMB 13137 / GD3B).